Reading from the N-terminus, the 269-residue chain is Intermembrane phospholipid transport system ATP-binding protein MlaF (269 aa).

Positions 9 to 245 (VDMRDVSFTR…PDPRVRQFLD (237 aa)) constitute an ABC transporter domain. 41-48 (GPSGIGKT) serves as a coordination point for ATP.

It belongs to the ABC transporter superfamily. MlaF family. In terms of assembly, the complex is composed of two ATP-binding proteins (MlaF), two transmembrane proteins (MlaE), two cytoplasmic solute-binding proteins (MlaB) and six periplasmic solute-binding proteins (MlaD).

It is found in the cell inner membrane. Functionally, part of the ABC transporter complex MlaFEDB, which is involved in a phospholipid transport pathway that maintains lipid asymmetry in the outer membrane by retrograde trafficking of phospholipids from the outer membrane to the inner membrane. Responsible for energy coupling to the transport system. The polypeptide is Intermembrane phospholipid transport system ATP-binding protein MlaF (Escherichia coli O157:H7).